The chain runs to 1078 residues: MAPRKRGGRGISFIFCCFRNNDHPEITYRLRNDSNFALQTMEPALPMPPVEELDVMFSELVDELDLTDKHREAMFALPAEKKWQIYCSKKKDQEENKGATSWPEFYIDQLNSMAARKSLLALEKEEEEERSKTIESLKTALRTKPMRFVTRFIDLDGLSCILNFLKTMDYETSESRIHTSLIGCIKALMNNSQGRAHVLAHSESINVIAQSLSTENIKTKVAVLEILGAVCLVPGGHKKVLQAMLHYQKYASERTRFQTLINDLDKSTGRYRDEVSLKTAIMSFINAVLSQGAGVESLDFRLHLRYEFLMLGIQPVIDKLREHENSTLDRHLDFFEMLRNEDELEFAKRFELVHIDTKSATQMFELTRKRLTHSEAYPHFMSILHHCLQMPYKRSGNTVQYWLLLDRIIQQIVIQNDKGQDPDSTPLENFNIKNVVRMLVNENEVKQWKEQAEKMRKEHNELQQKLEKKERECDAKTQEKEEMMQTLNKMKEKLEKETTEHKQVKQQVADLTAQLHELSRRAVCASIPGGPSPGAPGGPFPSSVPGSLLPPPPPPPLPGGMLPPPPPPLPPGGPPPPPGPPPLGAIMPPPGAPMGLALKKKSIPQPTNALKSFNWSKLPENKLEGTVWTEIDDTKVFKILDLEDLERTFSAYQRQQDFFVNSNSKQKEADAIDDTLSSKLKVKELSVIDGRRAQNCNILLSRLKLSNDEIKRAILTMDEQEDLPKDMLEQLLKFVPEKSDIDLLEEHKHELDRMAKADRFLFEMSRINHYQQRLQSLYFKKKFAERVAEVKPKVEAIRSGSEEVFRSGALKQLLEVVLAFGNYMNKGQRGNAYGFKISSLNKIADTKSSIDKNITLLHYLITIVENKYPSVLNLNEELRDIPQAAKVNMTELDKEISTLRSGLKAVETELEYQKSQPPQPGDKFVSVVSQFITVASFSFSDVEDLLAEAKDLFTKAVKHFGEEAGKIQPDEFFGIFDQFLQAVSEAKQENENMRKKKEEEERRARMEAQLKEQRERERKMRKAKENSEESGEFDDLVSALRSGEVFDKDLSKLKRNRKRITNQMTDSSRERPITKLNF.

Position 34 is a phosphoserine (serine 34). Residues 45–420 (LPMPPVEELD…QIVIQNDKGQ (376 aa)) enclose the GBD/FH3 domain. A coiled-coil region spans residues 437-526 (RMLVNENEVK…ELSRRAVCAS (90 aa)). Disordered stretches follow at residues 456 to 480 (RKEH…TQEK) and 524 to 585 (CASI…PLGA). The FH1 domain occupies 528 to 599 (PGGPSPGAPG…PGAPMGLALK (72 aa)). Composition is skewed to pro residues over residues 530-539 (GPSPGAPGGP) and 548-585 (LLPP…PLGA). The FH2 domain maps to 600–1009 (KKSIPQPTNA…EERRARMEAQ (410 aa)). An actin-binding region spans residues 693-702 (AQNCNILLSR). The segment covering 987–1027 (KQENENMRKKKEEEERRARMEAQLKEQRERERKMRKAKENS) has biased composition (basic and acidic residues). Disordered stretches follow at residues 987-1034 (KQEN…GEFD) and 1055-1078 (RNRK…KLNF). Phosphoserine occurs at positions 1027 and 1030. The region spanning 1027–1058 (SEESGEFDDLVSALRSGEVFDKDLSKLKRNRK) is the DAD domain. Residues 1067 to 1078 (SSRERPITKLNF) show a composition bias toward basic and acidic residues.

It belongs to the formin homology family. Homodimer. Interacts with CIP4, FNBP1 and FNBP1L. Interacts with the SH3 domains of Abl, BTK, endophilin, spectrin and SRC. Binds specifically to GTP-bound CDC42 and RHOA. Interacts with INTU; INTU mediates the indirect interaction between DAAM1 and NPHP4. Interacts (via coiled coil domain) with KANK1 (via coiled coil domain). As to expression, expressed in all tissues examined.

The protein resides in the cytoplasm. The protein localises to the cytoskeleton. It localises to the cilium basal body. Binds to disheveled (Dvl) and Rho, and mediates Wnt-induced Dvl-Rho complex formation. May play a role as a scaffolding protein to recruit Rho-GDP and Rho-GEF, thereby enhancing Rho-GTP formation. Can direct nucleation and elongation of new actin filaments. Involved in building functional cilia. Involved in the organization of the subapical actin network in multiciliated epithelial cells. Together with DAAM2, required for myocardial maturation and sarcomere assembly. During cell division, may regulate RHOA activation that signals spindle orientation and chromosomal segregation. This Homo sapiens (Human) protein is Disheveled-associated activator of morphogenesis 1 (DAAM1).